A 248-amino-acid polypeptide reads, in one-letter code: Pyridoxine 5'-phosphate synthase (248 aa).

Asn11 lines the 3-amino-2-oxopropyl phosphate pocket. 13–14 (DH) is a 1-deoxy-D-xylulose 5-phosphate binding site. Arg22 provides a ligand contact to 3-amino-2-oxopropyl phosphate. His47 (proton acceptor) is an active-site residue. 1-deoxy-D-xylulose 5-phosphate-binding residues include Arg49 and His54. The active-site Proton acceptor is the Glu74. Position 104 (Thr104) interacts with 1-deoxy-D-xylulose 5-phosphate. His198 (proton donor) is an active-site residue. Residues Gly199 and 220-221 (GH) each bind 3-amino-2-oxopropyl phosphate.

This sequence belongs to the PNP synthase family. In terms of assembly, homooctamer; tetramer of dimers.

Its subcellular location is the cytoplasm. It catalyses the reaction 3-amino-2-oxopropyl phosphate + 1-deoxy-D-xylulose 5-phosphate = pyridoxine 5'-phosphate + phosphate + 2 H2O + H(+). Its pathway is cofactor biosynthesis; pyridoxine 5'-phosphate biosynthesis; pyridoxine 5'-phosphate from D-erythrose 4-phosphate: step 5/5. In terms of biological role, catalyzes the complicated ring closure reaction between the two acyclic compounds 1-deoxy-D-xylulose-5-phosphate (DXP) and 3-amino-2-oxopropyl phosphate (1-amino-acetone-3-phosphate or AAP) to form pyridoxine 5'-phosphate (PNP) and inorganic phosphate. The sequence is that of Pyridoxine 5'-phosphate synthase from Ruegeria pomeroyi (strain ATCC 700808 / DSM 15171 / DSS-3) (Silicibacter pomeroyi).